A 249-amino-acid chain; its full sequence is 1-(5-phosphoribosyl)-5-[(5-phosphoribosylamino)methylideneamino] imidazole-4-carboxamide isomerase (249 aa).

Aspartate 8 serves as the catalytic Proton acceptor. The active-site Proton donor is aspartate 129.

This sequence belongs to the HisA/HisF family.

It is found in the cytoplasm. The enzyme catalyses 1-(5-phospho-beta-D-ribosyl)-5-[(5-phospho-beta-D-ribosylamino)methylideneamino]imidazole-4-carboxamide = 5-[(5-phospho-1-deoxy-D-ribulos-1-ylimino)methylamino]-1-(5-phospho-beta-D-ribosyl)imidazole-4-carboxamide. Its pathway is amino-acid biosynthesis; L-histidine biosynthesis; L-histidine from 5-phospho-alpha-D-ribose 1-diphosphate: step 4/9. The chain is 1-(5-phosphoribosyl)-5-[(5-phosphoribosylamino)methylideneamino] imidazole-4-carboxamide isomerase from Nitratidesulfovibrio vulgaris (strain ATCC 29579 / DSM 644 / CCUG 34227 / NCIMB 8303 / VKM B-1760 / Hildenborough) (Desulfovibrio vulgaris).